The sequence spans 191 residues: TATA-box-binding protein (191 aa).

A run of 2 repeats spans residues 18 to 94 and 108 to 185.

The protein belongs to the TBP family. Belongs to the TFIID complex together with the TBP-associated factors (TAFs). Binds DNA as monomer.

The protein resides in the nucleus. Functionally, general transcription factor that functions at the core of the DNA-binding multiprotein factor TFIID. Binding of TFIID to the TATA box is the initial transcriptional step of the pre-initiation complex (PIC), playing a role in the activation of eukaryotic genes transcribed by RNA polymerase II. In Acetabularia peniculus (Green alga), this protein is TATA-box-binding protein.